A 172-amino-acid polypeptide reads, in one-letter code: Protein-export protein SecB (172 aa).

This sequence belongs to the SecB family. In terms of assembly, homotetramer, a dimer of dimers. One homotetramer interacts with 1 SecA dimer.

The protein resides in the cytoplasm. In terms of biological role, one of the proteins required for the normal export of preproteins out of the cell cytoplasm. It is a molecular chaperone that binds to a subset of precursor proteins, maintaining them in a translocation-competent state. It also specifically binds to its receptor SecA. In Ralstonia pickettii (strain 12J), this protein is Protein-export protein SecB.